A 172-amino-acid chain; its full sequence is Shikimate kinase (172 aa).

Residue 11–16 coordinates ATP; that stretch reads ASGKTE. Residue T15 participates in Mg(2+) binding. The substrate site is built by D33, R57, and G80. R120 provides a ligand contact to ATP. Residue R142 participates in substrate binding.

Belongs to the shikimate kinase family. In terms of assembly, monomer. Mg(2+) is required as a cofactor.

It localises to the cytoplasm. It carries out the reaction shikimate + ATP = 3-phosphoshikimate + ADP + H(+). It functions in the pathway metabolic intermediate biosynthesis; chorismate biosynthesis; chorismate from D-erythrose 4-phosphate and phosphoenolpyruvate: step 5/7. Catalyzes the specific phosphorylation of the 3-hydroxyl group of shikimic acid using ATP as a cosubstrate. The sequence is that of Shikimate kinase from Flavobacterium psychrophilum (strain ATCC 49511 / DSM 21280 / CIP 103535 / JIP02/86).